The primary structure comprises 27 residues: FPPHKGKFDKKFIELVIIVDHSXXTYK.

In terms of domain architecture, Peptidase M12B spans 12–27; that stretch reads FIELVIIVDHSXXTYK. Glutamate 14 contributes to the Ca(2+) binding site.

Belongs to the venom metalloproteinase (M12B) family. P-III subfamily. P-IIId sub-subfamily. As to quaternary structure, heterodimer of a metalloproteinase subunit and a regulatory subunit comprising two homologous disulfide-linked lectins (AC P81798). The cofactor is Zn(2+). In terms of tissue distribution, expressed by the venom gland.

It localises to the secreted. Functionally, this carinactivase-like calcium-dependent prothrombin (F2) activator activates prothrombin via recognition of the calcium ion bound conformation of its gamma-carboxyglutamic acid (GLA) domain, and the subsequent conversion of prothrombin to active thrombin is catalyzed by the catalytic subunit. This chain is Zinc metalloproteinase multactivase catalytic subunit, found in Echis multisquamatus (Central Asian sand viper).